Consider the following 339-residue polypeptide: Methylcobamide:CoM methyltransferase MtbA (339 aa).

The Zn(2+) site is built by His-239, Cys-241, and Cys-316.

It belongs to the uroporphyrinogen decarboxylase family. MtbA/MtaA subfamily. Zn(2+) is required as a cofactor.

The enzyme catalyses methyl-Co(III)-[methylamine-specific corrinoid protein] + coenzyme M = Co(I)-[methylamine-specific corrinoid protein] + methyl-coenzyme M + H(+). It participates in one-carbon metabolism; methanogenesis from methylated amine. Methyltransferase involved in methanogenesis from methylamines methanol pathway. Catalyzes the transfer of the methyl group from the methylated corrinoid protein MtmC (MtmC1 or MtmC2) to coenzyme M, forming the substrate for coenzyme-B sulfoethylthiotransferase. The chain is Methylcobamide:CoM methyltransferase MtbA (mtbA) from Methanosarcina acetivorans (strain ATCC 35395 / DSM 2834 / JCM 12185 / C2A).